We begin with the raw amino-acid sequence, 340 residues long: Glyceraldehyde-3-phosphate dehydrogenase (340 aa).

NAD(+) is bound by residues Ser-11–Ile-12 and Gly-111. Ser-140–Asn-142 serves as a coordination point for D-glyceraldehyde 3-phosphate. The Nucleophile role is filled by Cys-141. Arg-169 contacts NAD(+). His-195–Gly-196 serves as a coordination point for D-glyceraldehyde 3-phosphate. Gln-303 provides a ligand contact to NAD(+).

It belongs to the glyceraldehyde-3-phosphate dehydrogenase family. In terms of assembly, homotetramer.

It is found in the cytoplasm. The catalysed reaction is D-glyceraldehyde 3-phosphate + phosphate + NADP(+) = (2R)-3-phospho-glyceroyl phosphate + NADPH + H(+). The enzyme catalyses D-glyceraldehyde 3-phosphate + phosphate + NAD(+) = (2R)-3-phospho-glyceroyl phosphate + NADH + H(+). It functions in the pathway carbohydrate degradation; glycolysis; pyruvate from D-glyceraldehyde 3-phosphate: step 1/5. The protein is Glyceraldehyde-3-phosphate dehydrogenase of Methanococcus maripaludis (strain DSM 14266 / JCM 13030 / NBRC 101832 / S2 / LL).